The chain runs to 293 residues: uncharacterized protein (293 aa).

An HTH lysR-type domain is found at 1–58 (MELKQLITFITAAEHVNFTLTAKMLNYAQSSVTSQIKSLEEEIGTPLFERLGKRLILT). Positions 18–37 (FTLTAKMLNYAQSSVTSQIK) form a DNA-binding region, H-T-H motif.

It belongs to the LysR transcriptional regulatory family.

Its subcellular location is the cytoplasm. This is an uncharacterized protein from Bacillus subtilis (strain 168).